The primary structure comprises 187 residues: uncharacterized protein (187 aa).

The region spanning 6–66 (TDLAEQIFSA…QFAHRVFSMF (61 aa)) is the HTH tetR-type domain. A DNA-binding region (H-T-H motif) is located at residues 29 to 48 (SMLKLAKEANVAAGTIYLYF).

This is an uncharacterized protein from Haemophilus influenzae (strain ATCC 51907 / DSM 11121 / KW20 / Rd).